Here is a 238-residue protein sequence, read N- to C-terminus: Purine nucleoside phosphorylase DeoD-type (238 aa).

His-4 provides a ligand contact to a purine D-ribonucleoside. Residues Gly-20, Arg-24, Arg-43, and 87-90 contribute to the phosphate site; that span reads RVGS. A purine D-ribonucleoside is bound by residues 179–181 and 203–204; these read EME and SD. Asp-204 acts as the Proton donor in catalysis.

The protein belongs to the PNP/UDP phosphorylase family. Homohexamer; trimer of homodimers.

The catalysed reaction is a purine D-ribonucleoside + phosphate = a purine nucleobase + alpha-D-ribose 1-phosphate. It catalyses the reaction a purine 2'-deoxy-D-ribonucleoside + phosphate = a purine nucleobase + 2-deoxy-alpha-D-ribose 1-phosphate. Its function is as follows. Catalyzes the reversible phosphorolytic breakdown of the N-glycosidic bond in the beta-(deoxy)ribonucleoside molecules, with the formation of the corresponding free purine bases and pentose-1-phosphate. The chain is Purine nucleoside phosphorylase DeoD-type from Histophilus somni (strain 129Pt) (Haemophilus somnus).